A 405-amino-acid chain; its full sequence is 26S proteasome regulatory subunit 8 homolog (405 aa).

Thr-2 is subject to N-acetylthreonine. Gly-189 to Thr-196 contacts ATP.

It belongs to the AAA ATPase family. May form a homodimer or a heterodimer with a related family member. Interacts with OLA1, TMA17, and UBR1. In terms of processing, N-acetylated by NAT1.

Its subcellular location is the cytoplasm. The protein localises to the nucleus. In terms of biological role, the 26S proteasome is involved in the ATP-dependent degradation of ubiquitinated proteins. The regulatory (or ATPase) complex confers ATP dependency and substrate specificity to the 26S complex. This Saccharomyces cerevisiae (strain ATCC 204508 / S288c) (Baker's yeast) protein is 26S proteasome regulatory subunit 8 homolog (RPT6).